A 448-amino-acid chain; its full sequence is N-succinylarginine dihydrolase (448 aa).

Residues 19–28 (AGLSSGNIAS), asparagine 110, and 137–138 (HR) each bind substrate. Residue glutamate 174 is part of the active site. Residue arginine 216 participates in substrate binding. Histidine 252 is a catalytic residue. The substrate site is built by aspartate 254 and asparagine 366. Residue cysteine 372 is the Nucleophile of the active site.

The protein belongs to the succinylarginine dihydrolase family. As to quaternary structure, homodimer.

The enzyme catalyses N(2)-succinyl-L-arginine + 2 H2O + 2 H(+) = N(2)-succinyl-L-ornithine + 2 NH4(+) + CO2. It functions in the pathway amino-acid degradation; L-arginine degradation via AST pathway; L-glutamate and succinate from L-arginine: step 2/5. Its function is as follows. Catalyzes the hydrolysis of N(2)-succinylarginine into N(2)-succinylornithine, ammonia and CO(2). This is N-succinylarginine dihydrolase from Legionella pneumophila (strain Corby).